Consider the following 297-residue polypeptide: Phenylalanine-4-hydroxylase (297 aa).

Residues His138, His143, and Glu184 each coordinate Fe cation.

The protein belongs to the biopterin-dependent aromatic amino acid hydroxylase family. In terms of assembly, monomer. It depends on Fe(2+) as a cofactor.

The enzyme catalyses (6R)-L-erythro-5,6,7,8-tetrahydrobiopterin + L-phenylalanine + O2 = (4aS,6R)-4a-hydroxy-L-erythro-5,6,7,8-tetrahydrobiopterin + L-tyrosine. The protein operates within amino-acid degradation; L-phenylalanine degradation; acetoacetate and fumarate from L-phenylalanine: step 1/6. The protein is Phenylalanine-4-hydroxylase (phhA) of Chromobacterium violaceum (strain ATCC 12472 / DSM 30191 / JCM 1249 / CCUG 213 / NBRC 12614 / NCIMB 9131 / NCTC 9757 / MK).